The chain runs to 328 residues: Malate dehydrogenase (328 aa).

11–17 (GAAGQIG) lines the NAD(+) pocket. Arg-94 and Arg-100 together coordinate substrate. Residues Asn-107, Gln-114, and 131 to 133 (VGN) each bind NAD(+). Substrate-binding residues include Asn-133 and Arg-164. His-189 functions as the Proton acceptor in the catalytic mechanism.

The protein belongs to the LDH/MDH superfamily. MDH type 2 family.

It carries out the reaction (S)-malate + NAD(+) = oxaloacetate + NADH + H(+). Its function is as follows. Catalyzes the reversible oxidation of malate to oxaloacetate. This chain is Malate dehydrogenase, found in Xanthomonas oryzae pv. oryzae (strain MAFF 311018).